The chain runs to 284 residues: MTQIIDGKALAQKMQSQLAKKVEDLKQEFGIVPGLVVILVGDNPASQVYVRNKERSAIAAGFKSETIRLSESICQEELIKIIHRYNKDESIHGILVQLPLPTHINEKRIILEIDPHKDVDGFHPMNTGHLWSGRPIMVPCTPAGIMEMLSEYQIDLEGKHAVIIGRSNIVGKPMAQLLLDKNATVTLTHSRTRNLSKISSEADVLIVAIGQGHFVTEEYVKEGAVVIDVGMNRDDNGKLIGDVAFEEVSRKASYITPVPGGVGPMTITMLLEQTYQSALRRVSS.

Residues 165–167 (GRS) and serine 190 contribute to the NADP(+) site.

It belongs to the tetrahydrofolate dehydrogenase/cyclohydrolase family. In terms of assembly, homodimer.

It catalyses the reaction (6R)-5,10-methylene-5,6,7,8-tetrahydrofolate + NADP(+) = (6R)-5,10-methenyltetrahydrofolate + NADPH. The enzyme catalyses (6R)-5,10-methenyltetrahydrofolate + H2O = (6R)-10-formyltetrahydrofolate + H(+). Its pathway is one-carbon metabolism; tetrahydrofolate interconversion. Functionally, catalyzes the oxidation of 5,10-methylenetetrahydrofolate to 5,10-methenyltetrahydrofolate and then the hydrolysis of 5,10-methenyltetrahydrofolate to 10-formyltetrahydrofolate. This is Bifunctional protein FolD from Streptococcus uberis (strain ATCC BAA-854 / 0140J).